Reading from the N-terminus, the 449-residue chain is Glutamyl-tRNA reductase (449 aa).

Substrate-binding positions include 48–51 (TCNR), serine 99, 104–106 (EDQ), and glutamine 110. Residue cysteine 49 is the Nucleophile of the active site. 179 to 184 (GAGEIG) lines the NADP(+) pocket.

Belongs to the glutamyl-tRNA reductase family. In terms of assembly, homodimer.

It carries out the reaction (S)-4-amino-5-oxopentanoate + tRNA(Glu) + NADP(+) = L-glutamyl-tRNA(Glu) + NADPH + H(+). It functions in the pathway porphyrin-containing compound metabolism; protoporphyrin-IX biosynthesis; 5-aminolevulinate from L-glutamyl-tRNA(Glu): step 1/2. In terms of biological role, catalyzes the NADPH-dependent reduction of glutamyl-tRNA(Glu) to glutamate 1-semialdehyde (GSA). The polypeptide is Glutamyl-tRNA reductase (Methanosarcina barkeri (strain Fusaro / DSM 804)).